The primary structure comprises 683 residues: Tripartite terminase subunit 3 (683 aa).

The Walker A motif signature appears at 217 to 224 (IPRRHGKT). Positions 312 to 317 (LLYIDE) match the Walker B motif motif. Glu-317 functions as the For ATPase activity in the catalytic mechanism. Active-site for nuclease activity residues include Asp-472, Glu-546, and Asp-658.

The protein belongs to the herpesviridae TRM3 protein family. Interacts with the terminase subunits TRM1 and TRM2. Interacts with portal protein.

The protein localises to the host nucleus. Functionally, component of the molecular motor that translocates viral genomic DNA in empty capsid during DNA packaging. Forms a tripartite terminase complex together with TRM1 and TRM2 in the host cytoplasm. Once the complex reaches the host nucleus, it interacts with the capsid portal vertex. This portal forms a ring in which genomic DNA is translocated into the capsid. TRM3 carries an RNase H-like nuclease activity that plays an important role for the cleavage of concatemeric viral DNA into unit length genomes. This Saimiri sciureus (Common squirrel monkey) protein is Tripartite terminase subunit 3.